Consider the following 511-residue polypeptide: Lysine--tRNA ligase 2 (511 aa).

Residues 1–22 (MTMEINNTDPFEKMPLPDDSGL) form a disordered region. Mg(2+) is bound by residues glutamate 421 and glutamate 428.

It belongs to the class-II aminoacyl-tRNA synthetase family. In terms of assembly, homodimer. Mg(2+) serves as cofactor.

It is found in the cytoplasm. The catalysed reaction is tRNA(Lys) + L-lysine + ATP = L-lysyl-tRNA(Lys) + AMP + diphosphate. The sequence is that of Lysine--tRNA ligase 2 from Methanosarcina mazei (strain ATCC BAA-159 / DSM 3647 / Goe1 / Go1 / JCM 11833 / OCM 88) (Methanosarcina frisia).